The chain runs to 463 residues: MVICKRCKLLDATLVSRKEPFCDECFVKFISLKQRKQMMSDDYFQDIFKISYPDKKRGQAEADKQNQDSNVLVPLSLGSSSLAVLDILNDTLLEQKQTHRGKTGFHVEVITICGQAEFEEVRGKIELLKSKYKENSDKILFHIVDRNQFFAVPFDLQEITLYIDNFNTLVRSSNNPSTTVEKVLASAPNKTAKEDLLNIIYTHLIKKFALQRNFKAILWGHSMTKLADEVISLTVKGRGAEIAGYLDDSSLDSKYNTAFRNFHPGRDVLLSEIDAYCHIKGLSQFSHNYVVQDTLFYDKFVDKPTKNVKLIKNMTMNELARQYFDNIEGDYSNVISTVVRTGAKLSNPDNELNQIMHCSICNAIIYKNPVNWLDGITVSKPFVIHNEEELTNYNAWEAANPDKAEKLNKMSDTPAKNVGVCYGCITTLTGMKDRKLEWIRRDDKAELTAVLQEYEIPSDDSEQ.

This sequence belongs to the CTU2/NCS2 family.

The protein resides in the cytoplasm. Its pathway is tRNA modification; 5-methoxycarbonylmethyl-2-thiouridine-tRNA biosynthesis. Functionally, plays a central role in 2-thiolation of mcm(5)S(2)U at tRNA wobble positions of tRNA(Lys), tRNA(Glu) and tRNA(Gln). May act by forming a heterodimer with NCS6 that ligates sulfur from thiocarboxylated URM1 onto the uridine of tRNAs at wobble position. Prior mcm(5) tRNA modification by the elongator complex is required for 2-thiolation. May also be involved in protein urmylation. The protein is Cytoplasmic tRNA 2-thiolation protein 2 of Kluyveromyces lactis (strain ATCC 8585 / CBS 2359 / DSM 70799 / NBRC 1267 / NRRL Y-1140 / WM37) (Yeast).